Here is a 461-residue protein sequence, read N- to C-terminus: ATP synthase subunit beta 2 (461 aa).

151 to 158 contacts ATP; it reads GGAGVGKT.

The protein belongs to the ATPase alpha/beta chains family. As to quaternary structure, F-type ATPases have 2 components, CF(1) - the catalytic core - and CF(0) - the membrane proton channel. CF(1) has five subunits: alpha(3), beta(3), gamma(1), delta(1), epsilon(1). CF(0) has three main subunits: a(1), b(2) and c(9-12). The alpha and beta chains form an alternating ring which encloses part of the gamma chain. CF(1) is attached to CF(0) by a central stalk formed by the gamma and epsilon chains, while a peripheral stalk is formed by the delta and b chains.

It is found in the cell inner membrane. The catalysed reaction is ATP + H2O + 4 H(+)(in) = ADP + phosphate + 5 H(+)(out). In terms of biological role, produces ATP from ADP in the presence of a proton gradient across the membrane. The catalytic sites are hosted primarily by the beta subunits. The protein is ATP synthase subunit beta 2 of Photobacterium profundum (strain SS9).